The following is a 109-amino-acid chain: MQQFEWIHAAWLAIAIVLEIIANVFLKFSDGFRRKIYGILSLAAVLGAFSALSQAVKGIDLSVAYALWGGFGIAATIAAGWVLFGQRLNNKGWAGVILLVAGMVLIKLA.

4 helical membrane-spanning segments follow: residues 6–26 (WIHA…NVFL), 36–56 (IYGI…SQAV), 64–84 (AYAL…WVLF), and 88–108 (LNNK…LIKL).

It belongs to the drug/metabolite transporter (DMT) superfamily. Small multidrug resistance (SMR) (TC 2.A.7.1) family. MdtI subfamily. As to quaternary structure, forms a complex with MdtJ.

The protein localises to the cell inner membrane. In terms of biological role, catalyzes the excretion of spermidine. In Klebsiella pneumoniae subsp. pneumoniae (strain ATCC 700721 / MGH 78578), this protein is Spermidine export protein MdtI.